Consider the following 555-residue polypeptide: Membrane protein insertase YidC (555 aa).

A helical transmembrane segment spans residues 7-24 (ILWVIFSMSLVLLYDNWQ). The tract at residues 62-81 (APGAAGTAAPAAPQAAAQPT) is disordered. Helical transmembrane passes span 334 to 354 (LELV…FWLL), 360 to 380 (FLGN…LVFF), 430 to 450 (LGGC…YWVL), 468 to 488 (LSVP…MFVQ), and 503 to 523 (VMMI…AGLV).

It belongs to the OXA1/ALB3/YidC family. Type 1 subfamily. Interacts with the Sec translocase complex via SecD. Specifically interacts with transmembrane segments of nascent integral membrane proteins during membrane integration.

It localises to the cell inner membrane. Required for the insertion and/or proper folding and/or complex formation of integral membrane proteins into the membrane. Involved in integration of membrane proteins that insert both dependently and independently of the Sec translocase complex, as well as at least some lipoproteins. Aids folding of multispanning membrane proteins. This Cupriavidus necator (strain ATCC 17699 / DSM 428 / KCTC 22496 / NCIMB 10442 / H16 / Stanier 337) (Ralstonia eutropha) protein is Membrane protein insertase YidC.